The chain runs to 645 residues: 1,4-alpha-glucan branching enzyme GlgB (645 aa).

Aspartate 309 serves as the catalytic Nucleophile. Glutamate 352 serves as the catalytic Proton donor. A disordered region spans residues 619-645; that stretch reads VKTRKGSKKQDGSKTKVRSNVTSRGKR. Over residues 636-645 the composition is skewed to polar residues; it reads RSNVTSRGKR.

This sequence belongs to the glycosyl hydrolase 13 family. GlgB subfamily. In terms of assembly, monomer.

It carries out the reaction Transfers a segment of a (1-&gt;4)-alpha-D-glucan chain to a primary hydroxy group in a similar glucan chain.. The protein operates within glycan biosynthesis; glycogen biosynthesis. Catalyzes the formation of the alpha-1,6-glucosidic linkages in glycogen by scission of a 1,4-alpha-linked oligosaccharide from growing alpha-1,4-glucan chains and the subsequent attachment of the oligosaccharide to the alpha-1,6 position. The sequence is that of 1,4-alpha-glucan branching enzyme GlgB from Bacillus cereus (strain AH820).